Here is a 590-residue protein sequence, read N- to C-terminus: Keratin, type II cytoskeletal 5 (590 aa).

Low complexity predominate over residues 1 to 18 (MSRQSSVSFRSGGSRSFS). Residues 1-20 (MSRQSSVSFRSGGSRSFSTA) form a disordered region. Residues 1–167 (MSRQSSVSFR…DPSIQRVRTE (167 aa)) are head. A phosphoserine mark is found at Ser5, Ser8, Ser16, and Ser21. At Thr24 the chain carries Phosphothreonine; by CDK1. 7 positions are modified to phosphoserine: Ser26, Ser36, Ser50, Ser64, Ser71, Ser75, and Ser82. Thr151 is subject to Phosphothreonine; by CDK1. A coil 1A region spans residues 168-203 (EREQIKTLNNKFASFIDKVRFLEQQNKVLDTKWTLL). An IF rod domain is found at 168 to 481 (EREQIKTLNN…KLLEGEECRL (314 aa)). The segment at 204–222 (QEQGTKTVRQNLEPLFEQY) is linker 1. The segment at 223–315 (INNLRRQLDS…FFDAELSQMQ (93 aa)) is coil 1B. Residues 316 to 338 (THVSDTSVVLSMDNNRNLDLDSI) are linker 12. A coil 2 region spans residues 339–477 (IAEVKAQYEE…ATYRKLLEGE (139 aa)). The tract at residues 478–590 (ECRLSGEGVG…TSSSRKSFKS (113 aa)) is tail. The disordered stretch occupies residues 566–590 (GSGGGSSSSVKFVSTTSSSRKSFKS). Low complexity predominate over residues 572 to 590 (SSSVKFVSTTSSSRKSFKS).

The protein belongs to the intermediate filament family. Heterodimer of a type I and a type II keratin. Heterodimer with type I keratin KRT25 leading to the formation of keratin intermediate filament (KIF) network. Forms a heterodimer (via 2B domains) with KRT14 (via 2B domains). Interacts with PLEC isoform 1C, when in a heterodimer with KRT14. Interacts with TCHP. Interacts with EPPK1. Interacts with AMELX. Interacts with PKP1 (via N-terminus) and PKP2. Post-translationally, phosphorylated by CDK1, AURKB and Rho-kinase, phosphorylation is regulated by the cell cycle. Thr-24 phosphorylation, mediated by CDK1, peaks during prometaphase or metaphase cells with phosphorylated filamentous structures evident throughout the cytoplasm during early mitosis. CDK1 phosphorylates Thr-24 in mitotic cells at the site of injury. O-glycosylated. In terms of tissue distribution, expressed in corneal epithelium (at protein level). Expressed in keratinocytes (at protein level).

The protein localises to the cytoplasm. Its function is as follows. Required for the formation of keratin intermediate filaments in the basal epidermis and maintenance of the skin barrier in response to mechanical stress. Regulates the recruitment of Langerhans cells to the epidermis, potentially by modulation of the abundance of macrophage chemotactic cytokines, macrophage inflammatory cytokines and CTNND1 localization in keratinocytes. This is Keratin, type II cytoskeletal 5 (KRT5) from Homo sapiens (Human).